We begin with the raw amino-acid sequence, 327 residues long: Probable cell division protein WhiA (327 aa).

The segment at residues 275-308 is a DNA-binding region (H-T-H motif); the sequence is SLEELGRLADPPMTKDAVAGRIRRLLSMADRKAK.

It belongs to the WhiA family.

In terms of biological role, involved in cell division and chromosome segregation. The chain is Probable cell division protein WhiA from Mycobacterium bovis (strain ATCC BAA-935 / AF2122/97).